The following is a 62-amino-acid chain: uncharacterized protein (62 aa).

Residues 17–62 (YNNYNNNNNNNNNNNNNNNNNNNNNNNNNNNNNNNNNNNNNNKNNN) form a disordered region.

This is an uncharacterized protein from Dictyostelium discoideum (Social amoeba).